Consider the following 286-residue polypeptide: Phosphate import ATP-binding protein PstB (286 aa).

Residues 40–281 (VVARDFSIYY…PKDSMTEDYI (242 aa)) form the ABC transporter domain. 72-79 (GPSGCGKS) serves as a coordination point for ATP.

It belongs to the ABC transporter superfamily. Phosphate importer (TC 3.A.1.7) family. As to quaternary structure, the complex is composed of two ATP-binding proteins (PstB), two transmembrane proteins (PstC and PstA) and a solute-binding protein (PstS).

It is found in the cell inner membrane. The catalysed reaction is phosphate(out) + ATP + H2O = ADP + 2 phosphate(in) + H(+). Its function is as follows. Part of the ABC transporter complex PstSACB involved in phosphate import. Responsible for energy coupling to the transport system. This chain is Phosphate import ATP-binding protein PstB, found in Chlorobaculum tepidum (strain ATCC 49652 / DSM 12025 / NBRC 103806 / TLS) (Chlorobium tepidum).